The primary structure comprises 467 residues: Tubulin beta-1 chain (467 aa).

Residues Q11, E69, S138, G142, T143, G144, N204, and N226 each coordinate GTP. E69 is a Mg(2+) binding site. Residues 429 to 444 (TIDDEEGGEEEEGGAE) show a composition bias toward acidic residues. The segment at 429–448 (TIDDEEGGEEEEGGAEEEAR) is disordered.

The protein belongs to the tubulin family. Dimer of alpha and beta chains. A typical microtubule is a hollow water-filled tube with an outer diameter of 25 nm and an inner diameter of 15 nM. Alpha-beta heterodimers associate head-to-tail to form protofilaments running lengthwise along the microtubule wall with the beta-tubulin subunit facing the microtubule plus end conferring a structural polarity. Microtubules usually have 13 protofilaments but different protofilament numbers can be found in some organisms and specialized cells. Requires Mg(2+) as cofactor.

It localises to the cytoplasm. The protein localises to the cytoskeleton. It is found in the spindle. The protein resides in the nucleus. Tubulin is the major constituent of microtubules, a cylinder consisting of laterally associated linear protofilaments composed of alpha- and beta-tubulin heterodimers. Microtubules grow by the addition of GTP-tubulin dimers to the microtubule end, where a stabilizing cap forms. Below the cap, tubulin dimers are in GDP-bound state, owing to GTPase activity of alpha-tubulin. This Physarum polycephalum (Slime mold) protein is Tubulin beta-1 chain (BETA).